The primary structure comprises 485 residues: Membrane-bound lytic murein transglycosylase F (485 aa).

An N-terminal signal peptide occupies residues M1 to E29. Residues K30–V267 form a non-LT domain region. The LT domain stretch occupies residues D268 to M485. Residue E314 is part of the active site. Residues E465–M485 form a disordered region.

It in the N-terminal section; belongs to the bacterial solute-binding protein 3 family. The protein in the C-terminal section; belongs to the transglycosylase Slt family.

Its subcellular location is the cell outer membrane. It carries out the reaction Exolytic cleavage of the (1-&gt;4)-beta-glycosidic linkage between N-acetylmuramic acid (MurNAc) and N-acetylglucosamine (GlcNAc) residues in peptidoglycan, from either the reducing or the non-reducing ends of the peptidoglycan chains, with concomitant formation of a 1,6-anhydrobond in the MurNAc residue.. Its function is as follows. Murein-degrading enzyme that degrades murein glycan strands and insoluble, high-molecular weight murein sacculi, with the concomitant formation of a 1,6-anhydromuramoyl product. Lytic transglycosylases (LTs) play an integral role in the metabolism of the peptidoglycan (PG) sacculus. Their lytic action creates space within the PG sacculus to allow for its expansion as well as for the insertion of various structures such as secretion systems and flagella. This chain is Membrane-bound lytic murein transglycosylase F, found in Pseudomonas putida (strain W619).